The chain runs to 827 residues: MTALKKIEKAAPLPVSTNFGIEGMTCASCVRRVEKAITAVPGVASANVNLATERATVQFDGEPDTLAVLHAIEKAGYAPRIATEELQIEGMTCASCVSRVEKALKAVPGVADAAVNLATEKATVSLISGTADLSALEAAVRGAGYELRKTKPAEASAGDEDHRAAELGSLKSAVTISVLMTLPLFLMEMGSHFISGVHELIMGTIGMRNNLYLQFALATLVLFGPGLRFFRKGVPNLLRWTPDMNSLVVLGTTAAWGYSVVATFVPRVLPSGTANVYYEAAAVIVTLVLLGRYLESRAKGRTSQAIKRLVGLQPKTAFVLRGGEFVEAQISEVVAGDVIRIRPGEKIPVDGTVIDGSSYVDEAMITGEPLPVQKTADSAVVGGTINKTGSITFKATKVGSDTLLAQIIKLVETAQGSKLPIQALVDRVTGWFVPAVILAAVLTFAAWYTFGPSPALSFALVNAVAVLIIACPCAMGLATPTSIMVGTGRAAELGILFRKGEALQRLRDADVVALDKTGTLTKGRPELTDLVAAEGFEADEVLFLVASLETLSEHPIAEAIVSAAKSKGIATAAVNGFEATPGFGVSGSVSGRQVLVGADRALATNGIDVSGFSTEAELLGASGKSPLYAAIEGRLAAIVAVSDPVKETTPQAIRSLHELGLKVAMITGDNRRTAEAIARKLGIDEVVAEVLPEGKVEAIRKLRQGGRSVAFIGDGINDAPALAEADVGIAVGTGTDIAIESADVVLMSGDLNGVAKAIALSKATILNIKQNLFWAFAYNVSLIPVAAGVLYPVTGILLSPIFAAAAMAMSSVFVLGNALRLKSVNPA.

HMA domains follow at residues Val15–Arg80 and Ala82–Arg148. Cu cation contacts are provided by Cys26, Cys29, Cys93, and Cys96. 6 helical membrane-spanning segments follow: residues Val174–Ile194, Asn210–Phe230, Ser246–Pro266, Ser271–Gly291, Gly430–Phe450, and Phe458–Ala478. Asp515 acts as the 4-aspartylphosphate intermediate in catalysis. Mg(2+) contacts are provided by Asp714 and Asp718. Helical transmembrane passes span Asn771–Val793 and Leu797–Leu819.

It belongs to the cation transport ATPase (P-type) (TC 3.A.3) family. Type IB subfamily.

It localises to the cell membrane. It catalyses the reaction Cu(2+)(in) + ATP + H2O = Cu(2+)(out) + ADP + phosphate + H(+). Functionally, involved in copper transport. In Rhizobium meliloti (strain 1021) (Ensifer meliloti), this protein is Copper-transporting ATPase 2 (actP2).